The sequence spans 290 residues: Endonuclease 2 (290 aa).

The first 27 residues, 1 to 27 (MANQKGLHVVMMIITVWLLYAAPNIHG), serve as a signal peptide directing secretion. A divalent metal cation is bound by residues Trp28 and His33. 28–33 (WGKEGH) is a substrate binding site. A disulfide bridge links Cys37 with Cys68. Asp72 and His85 together coordinate a divalent metal cation. Residues 72-76 (DRVKF), 85-88 (HYIN), and 94-99 (SYQYNR) each bind substrate. Intrachain disulfides connect Cys93/Cys245, Cys101/Cys111, and Cys226/Cys232. Asn118 and Tyr136 together coordinate substrate. The N-linked (GlcNAc...) asparagine glycan is linked to Asn118. An N-linked (GlcNAc...) asparagine glycan is attached at Asn137. His147, Asp151, His157, His181, and Asp185 together coordinate a divalent metal cation. The interval 147–196 (HFMGDIHQPLHVSYASDKGGNTIEVHWYTRKANLHHIWDSNIIETAEADL) is substrate binding. Asn211 carries an N-linked (GlcNAc...) asparagine glycan. The propeptide at 283–290 (ATLNRIFG) is removed in mature form.

This sequence belongs to the nuclease type I family. Monomer. The cofactor is Mn(2+). Ca(2+) is required as a cofactor. Zn(2+) serves as cofactor. Post-translationally, N-glycosylation is required for enzymatic stability and activity.

The catalysed reaction is Endonucleolytic cleavage to 5'-phosphomononucleotide and 5'-phosphooligonucleotide end-products.. Its activity is regulated as follows. ssDNase activity is inhibited by the divalent cation chelator EDTA and the reducing agent DTT. Divalent metal ions (e.g. Ca(2+), Mg(2+) and Zn(2+)) and DTT represses RNase activity. RNase activity is enhanced by EDTA. Also repressed by vanadate (VO(4)(3-)) and phosphate (PO(4)(3-)) by occupying the active site. Its function is as follows. Endonuclease mostly active on RNA and ssDNA, and to a lower extent, on dsDNA. Can cleave mismatch regions in heteroduplex DNA containing single base pair mismatches or insertion/deletion bases. In contradiction with PubMed:22506810, cannot hydrolyze single-stranded DNA and does not cleave mismatches. The sequence is that of Endonuclease 2 from Arabidopsis thaliana (Mouse-ear cress).